The primary structure comprises 68 residues: UPF0291 protein TTE2340 (68 aa).

Belongs to the UPF0291 family.

Its subcellular location is the cytoplasm. The sequence is that of UPF0291 protein TTE2340 from Caldanaerobacter subterraneus subsp. tengcongensis (strain DSM 15242 / JCM 11007 / NBRC 100824 / MB4) (Thermoanaerobacter tengcongensis).